The primary structure comprises 405 residues: Cysteine desulfurase IscS (405 aa).

Position 156 (Asn156) interacts with pyridoxal 5'-phosphate. The residue at position 207 (Lys207) is an N6-(pyridoxal phosphate)lysine. Cys329 functions as the Cysteine persulfide intermediate in the catalytic mechanism. Residue Cys329 coordinates [2Fe-2S] cluster.

The protein belongs to the class-V pyridoxal-phosphate-dependent aminotransferase family. NifS/IscS subfamily. In terms of assembly, homodimer. Forms a heterotetramer with IscU, interacts with other sulfur acceptors. Pyridoxal 5'-phosphate is required as a cofactor.

Its subcellular location is the cytoplasm. It carries out the reaction (sulfur carrier)-H + L-cysteine = (sulfur carrier)-SH + L-alanine. It functions in the pathway cofactor biosynthesis; iron-sulfur cluster biosynthesis. Its function is as follows. Master enzyme that delivers sulfur to a number of partners involved in Fe-S cluster assembly, tRNA modification or cofactor biosynthesis. Catalyzes the removal of elemental sulfur atoms from cysteine to produce alanine. Functions as a sulfur delivery protein for Fe-S cluster synthesis onto IscU, an Fe-S scaffold assembly protein, as well as other S acceptor proteins. In Dechloromonas aromatica (strain RCB), this protein is Cysteine desulfurase IscS.